The primary structure comprises 333 residues: Holliday junction branch migration complex subunit RuvB (333 aa).

The interval 1-182 (MTNRILDMEQ…FGITGHMEYY (182 aa)) is large ATPase domain (RuvB-L). ATP-binding positions include Leu-21, Arg-22, Gly-63, Lys-66, Thr-67, Thr-68, 129–131 (EDF), Arg-172, Tyr-182, and Arg-219. Residue Thr-67 participates in Mg(2+) binding. The tract at residues 183 to 253 (ELADLTEIVE…ITDKALTMLD (71 aa)) is small ATPAse domain (RuvB-S). The interval 256–333 (REGLDYVDQK…EHLGYPYTEK (78 aa)) is head domain (RuvB-H). Residues Arg-292, Arg-311, Arg-313, and Arg-316 each contribute to the DNA site.

This sequence belongs to the RuvB family. Homohexamer. Forms an RuvA(8)-RuvB(12)-Holliday junction (HJ) complex. HJ DNA is sandwiched between 2 RuvA tetramers; dsDNA enters through RuvA and exits via RuvB. An RuvB hexamer assembles on each DNA strand where it exits the tetramer. Each RuvB hexamer is contacted by two RuvA subunits (via domain III) on 2 adjacent RuvB subunits; this complex drives branch migration. In the full resolvosome a probable DNA-RuvA(4)-RuvB(12)-RuvC(2) complex forms which resolves the HJ.

Its subcellular location is the cytoplasm. It catalyses the reaction ATP + H2O = ADP + phosphate + H(+). The RuvA-RuvB-RuvC complex processes Holliday junction (HJ) DNA during genetic recombination and DNA repair, while the RuvA-RuvB complex plays an important role in the rescue of blocked DNA replication forks via replication fork reversal (RFR). RuvA specifically binds to HJ cruciform DNA, conferring on it an open structure. The RuvB hexamer acts as an ATP-dependent pump, pulling dsDNA into and through the RuvAB complex. RuvB forms 2 homohexamers on either side of HJ DNA bound by 1 or 2 RuvA tetramers; 4 subunits per hexamer contact DNA at a time. Coordinated motions by a converter formed by DNA-disengaged RuvB subunits stimulates ATP hydrolysis and nucleotide exchange. Immobilization of the converter enables RuvB to convert the ATP-contained energy into a lever motion, pulling 2 nucleotides of DNA out of the RuvA tetramer per ATP hydrolyzed, thus driving DNA branch migration. The RuvB motors rotate together with the DNA substrate, which together with the progressing nucleotide cycle form the mechanistic basis for DNA recombination by continuous HJ branch migration. Branch migration allows RuvC to scan DNA until it finds its consensus sequence, where it cleaves and resolves cruciform DNA. The polypeptide is Holliday junction branch migration complex subunit RuvB (Streptococcus suis (strain 98HAH33)).